The primary structure comprises 689 residues: MAQHTFLVEIGTAELPPKALRSLAEAFADNLKSELTKADLAFGDVEWFASPRRLALKVSELAGEQPSKSVEKRGPAVAQAFDAEGKPTKAAEGWARGNGITVEQAERLVTDKGEWLVHTAKVEGRPAKDLLGELVSQALAKLPIPKMMRWGDKTIQFVRPVFTVTLLLDGELVPAHILGIDSARTLRGHRFMGESEFTIDNASQYPQILQERGMVIADFMARKVKIKADAEAAAAAFGGVADLDDALLEEVTALVEWPVVLTANFEEKFLAVPAEALVHTMKGDQKYFPVYDKNGKLLPKFIFVTNIESKDPSQIISGNEKVVRPRLSDAEFFFKTDLKQTLASRLPRLETVLFQQQLGTVKAKVERIETVAGFIAERIGADVAQAKRAGLLSKCDLMTNMVGEFTDTQGVMGMHYARHDGEDEAVAVALNEQYMPRFAGDALPSGLVACAVALADKFDTLAGIFGIGMLPKGDKDPFALRRAAIGALRIMTEKQLDLDLVELVEEAVRVYGDKLTNKTVVTDVVDFMLGRFRAAYQDEGIGADVVLAVLARRPTRPLDFDRRVKAVSHFRSLDAALALAAANKRVSNILAKVEGELPTAVKPELLVDAAEKALATQVAELQAELAPLFAAGDYQAALTRLAALREPVDTFFNEVMVMADDEALKANRLALLNNLRNLFLQVADISLLQ.

The protein belongs to the class-II aminoacyl-tRNA synthetase family. As to quaternary structure, tetramer of two alpha and two beta subunits.

Its subcellular location is the cytoplasm. It carries out the reaction tRNA(Gly) + glycine + ATP = glycyl-tRNA(Gly) + AMP + diphosphate. The polypeptide is Glycine--tRNA ligase beta subunit (Aeromonas hydrophila subsp. hydrophila (strain ATCC 7966 / DSM 30187 / BCRC 13018 / CCUG 14551 / JCM 1027 / KCTC 2358 / NCIMB 9240 / NCTC 8049)).